The primary structure comprises 94 residues: Putative defensin-like protein 88 (94 aa).

The signal sequence occupies residues 1–26 (MATQKFSYFLLVLLMVFALILPSIIS). 3 cysteine pairs are disulfide-bonded: C32-C72, C38-C59, and C48-C71.

This sequence belongs to the DEFL family.

The protein resides in the secreted. The chain is Putative defensin-like protein 88 from Arabidopsis thaliana (Mouse-ear cress).